A 412-amino-acid chain; its full sequence is Histidine--tRNA ligase (412 aa).

It belongs to the class-II aminoacyl-tRNA synthetase family. As to quaternary structure, homodimer.

It localises to the cytoplasm. The enzyme catalyses tRNA(His) + L-histidine + ATP = L-histidyl-tRNA(His) + AMP + diphosphate + H(+). This chain is Histidine--tRNA ligase, found in Maridesulfovibrio salexigens (strain ATCC 14822 / DSM 2638 / NCIMB 8403 / VKM B-1763) (Desulfovibrio salexigens).